The chain runs to 214 residues: Ras-related protein RABA5c (214 aa).

GTP is bound at residue 19–26 (GDSAVGKS). An Effector region motif is present at residues 41–49 (SKATIGVEF). Residues 67–71 (DTAGQ), 125–128 (NKCD), and 155–156 (SA) contribute to the GTP site. S-geranylgeranyl cysteine attachment occurs at residues cysteine 211 and cysteine 212.

Belongs to the small GTPase superfamily. Rab family. In terms of assembly, interacts (via C-terminus) with GDI1. Interacts with PUX8/SAY1. In terms of tissue distribution, expressed in roots and actively dividing cells.

The protein localises to the golgi apparatus membrane. The protein resides in the golgi apparatus. It localises to the trans-Golgi network membrane. It is found in the cell membrane. Functionally, intracellular vesicle trafficking and protein transport. Binds GTP and GDP and possesses intrinsic GTPase activity. This chain is Ras-related protein RABA5c (RABA5C), found in Arabidopsis thaliana (Mouse-ear cress).